Consider the following 236-residue polypeptide: MSLTLFSFLSLVSILCIVTAAPVTNVNFTSIQVSSMQHIAAINKASFFSPTALPANATENGLTGSCKPIILIFAKGTGENGNVGDGSSPGPAWFSELRNAIGEDKIAVQGVQYEADVFGYLVGGDPEGSQNYLTITNQAVTQCPNSKIVIGGYSQGAQITHNAAQLYSPLVTSRIAAVVLFGDPYTDKPVGQVSPSSVLEICHDGDIICTGSGGPDPHLTYSKNATCAAKFVLDRI.

The N-terminal stretch at 1–20 is a signal peptide; sequence MSLTLFSFLSLVSILCIVTA. A disulfide bridge links Cys66 with Cys143. The Nucleophile role is filled by Ser154. A disulfide bridge links Cys202 with Cys209. Asp206 is a catalytic residue. The Proton donor/acceptor role is filled by His218.

The protein belongs to the cutinase family. In terms of processing, the 2 disulfide bonds play a critical role in holding the catalytic residues in juxta-position; reduction of the disulfide bridges results in the complete inactivation of the enzyme.

It localises to the secreted. The enzyme catalyses cutin + H2O = cutin monomers.. Functionally, catalyzes the hydrolysis of complex carboxylic polyesters found in the cell wall of plants. Degrades cutin, a macromolecule that forms the structure of the plant cuticle. Allows pathogenic fungi to penetrate through the cuticular barrier into the host plant during the initial stage of fungal infection. In Blumeria hordei (Barley powdery mildew), this protein is Cutinase (CUT1).